Here is a 470-residue protein sequence, read N- to C-terminus: Calcitonin gene-related peptide type 1 receptor (470 aa).

A signal peptide spans 1-23; the sequence is MTASCWTICLFLLGSVTEFIVLA. Topologically, residues 24–147 are extracellular; the sequence is SPEVNESQQQ…HTTEGRRTAM (124 aa). N-linked (GlcNAc...) asparagine glycosylation is found at N28, N74, N126, and N131. 3 disulfide bridges follow: C56/C82, C73/C113, and C96/C135. The chain crosses the membrane as a helical span at residues 148-172; that stretch reads NLFYLALIGHGLSLTSLFISLGIFF. At 173 to 183 the chain is on the cytoplasmic side; sequence HFKSLSCQRIT. A helical membrane pass occupies residues 184–206; it reads LHKNLFFSFVLNSIITIIWLTAV. The Extracellular segment spans residues 207–217; it reads ANNQELVQQNP. Residues 218–246 form a helical membrane-spanning segment; sequence ISCKISQFIHLYIFGCNYFWMLCEGIYLH. Residues 247–260 lie on the Cytoplasmic side of the membrane; the sequence is TLIVVAVFAEKQHL. Residues 261–281 form a helical membrane-spanning segment; it reads MWYYLLGWGFPLIPATIHAVA. The Extracellular segment spans residues 282–297; that stretch reads RSYYYNDNCWISSNTS. An N-linked (GlcNAc...) asparagine glycan is attached at N295. A helical transmembrane segment spans residues 298-322; it reads LLYIIHGPICAAMLVNLFFLLNIVR. The Cytoplasmic segment spans residues 323 to 337; the sequence is VLITKLKVTHQAKSS. Residues 338–359 traverse the membrane as a helical segment; sequence LYMKAVRATLILVPLLGIQYVL. Over 360 to 374 the chain is Extracellular; sequence LPYKPSGRVSAEIYD. Residues 375–395 traverse the membrane as a helical segment; that stretch reads YIMHILMHYQGLLVATIFCFF. Topologically, residues 396–470 are cytoplasmic; sequence NGEVQAVLRR…AIIKPENPFA (75 aa).

It belongs to the G-protein coupled receptor 2 family.

It localises to the cell membrane. May function as G protein-coupled receptor for calcitonin-gene-related peptides and adrenomedullin. Specificity may be modulated by accessory proteins. May activate cAMP-dependent pathway. This is Calcitonin gene-related peptide type 1 receptor (calcrla) from Danio rerio (Zebrafish).